Consider the following 209-residue polypeptide: tRNA (guanine-N(7)-)-methyltransferase (209 aa).

S-adenosyl-L-methionine-binding residues include D35, E60, N87, and D113. D113 is an active-site residue. 2 residues coordinate substrate: K117 and D149.

The protein belongs to the class I-like SAM-binding methyltransferase superfamily. TrmB family.

The catalysed reaction is guanosine(46) in tRNA + S-adenosyl-L-methionine = N(7)-methylguanosine(46) in tRNA + S-adenosyl-L-homocysteine. It functions in the pathway tRNA modification; N(7)-methylguanine-tRNA biosynthesis. Its function is as follows. Catalyzes the formation of N(7)-methylguanine at position 46 (m7G46) in tRNA. The polypeptide is tRNA (guanine-N(7)-)-methyltransferase (Prochlorococcus marinus (strain AS9601)).